The following is a 202-amino-acid chain: Protein GrpE (202 aa).

Residues 21–37 (EELKNEEVKEETHEHEH) show a composition bias toward basic and acidic residues. A disordered region spans residues 21-52 (EELKNEEVKEETHEHEHKHGGHTCCGKHGHKH). The span at 38 to 51 (KHGGHTCCGKHGHK) shows a compositional bias: basic residues.

This sequence belongs to the GrpE family. As to quaternary structure, homodimer.

The protein resides in the cytoplasm. Its function is as follows. Participates actively in the response to hyperosmotic and heat shock by preventing the aggregation of stress-denatured proteins, in association with DnaK and GrpE. It is the nucleotide exchange factor for DnaK and may function as a thermosensor. Unfolded proteins bind initially to DnaJ; upon interaction with the DnaJ-bound protein, DnaK hydrolyzes its bound ATP, resulting in the formation of a stable complex. GrpE releases ADP from DnaK; ATP binding to DnaK triggers the release of the substrate protein, thus completing the reaction cycle. Several rounds of ATP-dependent interactions between DnaJ, DnaK and GrpE are required for fully efficient folding. This Fusobacterium nucleatum subsp. polymorphum (Fusobacterium polymorphum) protein is Protein GrpE.